A 197-amino-acid chain; its full sequence is DNA-directed RNA polymerases I, II, and III subunit rpabc1 (197 aa).

Belongs to the archaeal Rpo5/eukaryotic RPB5 RNA polymerase subunit family. In terms of assembly, component of the RNA polymerase I (Pol I), RNA polymerase II (Pol II) and RNA polymerase III (Pol III) complexes consisting of at least 13, 12 and 17 subunits, respectively. In RNA Pol II, this subunit is present in 2-fold molar excess over the other subunits.

The protein localises to the nucleus. Functionally, DNA-dependent RNA polymerase catalyzes the transcription of DNA into RNA using the four ribonucleoside triphosphates as substrates. Common component of RNA polymerases I, II and III which synthesize ribosomal RNA precursors, mRNA precursors and many functional non-coding RNAs, and small RNAs, such as 5S rRNA and tRNAs, respectively. Pol II is the central component of the basal RNA polymerase II transcription machinery. Pols are composed of mobile elements that move relative to each other. In Pol II, RPB5 is part of the lower jaw surrounding the central large cleft and thought to grab the incoming DNA template. Seems to be the major component in this process. The polypeptide is DNA-directed RNA polymerases I, II, and III subunit rpabc1 (polr2e) (Dictyostelium discoideum (Social amoeba)).